Consider the following 76-residue polypeptide: Conotoxin Vc6.9 (76 aa).

A signal peptide spans 1–19; sequence MEKLTILLLVAAVLMSTQA. The propeptide occupies 20–41; that stretch reads LMQEQRQKAKINLFSKRKPSAE. Cystine bridges form between Cys49–Cys63, Cys56–Cys67, and Cys62–Cys72.

The protein belongs to the conotoxin O2 superfamily. In terms of tissue distribution, expressed by the venom duct.

It localises to the secreted. Functionally, inhibits voltage-gated ion channels. This is Conotoxin Vc6.9 from Conus victoriae (Queen Victoria cone).